The sequence spans 352 residues: Putative histone-lysine N-methyltransferase ASHH4 (352 aa).

In terms of domain architecture, AWS spans D60–H109. The SET domain occupies K111–Q228. Positions A234–G250 constitute a Post-SET domain.

The protein belongs to the class V-like SAM-binding methyltransferase superfamily. Histone-lysine methyltransferase family. SET2 subfamily.

The protein resides in the nucleus. Its subcellular location is the chromosome. It localises to the centromere. It carries out the reaction L-lysyl-[histone] + S-adenosyl-L-methionine = N(6)-methyl-L-lysyl-[histone] + S-adenosyl-L-homocysteine + H(+). Histone methyltransferase. The polypeptide is Putative histone-lysine N-methyltransferase ASHH4 (ASHH4) (Arabidopsis thaliana (Mouse-ear cress)).